Reading from the N-terminus, the 271-residue chain is Phosphonoacetaldehyde hydrolase (271 aa).

Catalysis depends on Asp-12, which acts as the Nucleophile. The Mg(2+) site is built by Asp-12 and Ala-14. Lys-54 functions as the Schiff-base intermediate with substrate in the catalytic mechanism. Asp-188 is a Mg(2+) binding site.

This sequence belongs to the HAD-like hydrolase superfamily. PhnX family. As to quaternary structure, homodimer. Mg(2+) serves as cofactor.

The catalysed reaction is phosphonoacetaldehyde + H2O = acetaldehyde + phosphate + H(+). In terms of biological role, involved in phosphonate degradation. This chain is Phosphonoacetaldehyde hydrolase, found in Vibrio cholerae serotype O1 (strain ATCC 39541 / Classical Ogawa 395 / O395).